The sequence spans 484 residues: Glutamate--tRNA ligase (484 aa).

The 'HIGH' region signature appears at 11 to 21 (PSPTGYLHIGN). The 'KMSKS' region signature appears at 252–256 (KLSKR). Lysine 255 serves as a coordination point for ATP.

This sequence belongs to the class-I aminoacyl-tRNA synthetase family. Glutamate--tRNA ligase type 1 subfamily. In terms of assembly, monomer.

It is found in the cytoplasm. The enzyme catalyses tRNA(Glu) + L-glutamate + ATP = L-glutamyl-tRNA(Glu) + AMP + diphosphate. In terms of biological role, catalyzes the attachment of glutamate to tRNA(Glu) in a two-step reaction: glutamate is first activated by ATP to form Glu-AMP and then transferred to the acceptor end of tRNA(Glu). This chain is Glutamate--tRNA ligase, found in Staphylococcus aureus (strain bovine RF122 / ET3-1).